Consider the following 2544-residue polypeptide: DNA polymerase theta (2544 aa).

Residues 1–13 (MSLPRRSRKRRRS) show a composition bias toward basic residues. The interval 1–57 (MSLPRRSRKRRRSSSGSDTFSGDGDSFVSPQLRCGPVLSPPPGLGRGRRLTGTGTNK) is disordered. Positions 14 to 29 (SSGSDTFSGDGDSFVS) are enriched in low complexity. ATP contacts are provided by residues glutamine 95 and 114-121 (APTSAGKT). Residues 101–285 (LGHVLEGKNL…WLNAELYHTD (185 aa)) form the Helicase ATP-binding domain. Residues 101-551 (LGHVLEGKNL…STSQDMQTYA (451 aa)) are helicase activity. Residues 215–218 (DELH) carry the DEAH box motif. Positions 320 to 551 (GDEDHIVSLC…STSQDMQTYA (232 aa)) constitute a Helicase C-terminal domain. The tract at residues 844–890 (DEEEEAAEERRSMRTIWVTGKGLSAREAAALIVEEAKMILQQDLIEM) is interaction with RAD51. A disordered region spans residues 896–955 (PKSPLSSSTHSRTSTSEVKEHTFKSQTKSSHKRLASMGRNSIRASGSNDKPSPDAERGID). The segment covering 898 to 911 (SPLSSSTHSRTSTS) has biased composition (low complexity). The segment covering 933–945 (GRNSIRASGSNDK) has biased composition (polar residues). The span at 946 to 955 (PSPDAERGID) shows a compositional bias: basic and acidic residues. Position 983 is an N6-acetyllysine (lysine 983). Polar residues predominate over residues 1022-1034 (LSFSSEQVNNTLP). Disordered stretches follow at residues 1022–1058 (LSFS…GMHR) and 1128–1167 (VGHP…ESQL). A compositionally biased stretch (low complexity) spans 1128-1139 (VGHPAAGSSPAA). Over residues 1140 to 1155 (ARDRRGLAARETEKGN) the composition is skewed to basic and acidic residues. The residue at position 1265 (serine 1265) is a Phosphoserine. Disordered stretches follow at residues 1266 to 1288 (GVQG…SNPA) and 1331 to 1353 (QNKC…DHVD). Phosphoserine is present on residues serine 1438, serine 1442, serine 1444, and serine 1449. Residues 1478 to 1501 (FSNPPHPQEDPVMTPTVSEPQGTQ) are disordered. Polar residues predominate over residues 1492 to 1501 (PTVSEPQGTQ). Residues serine 1511, serine 1519, serine 1585, and serine 1592 each carry the phosphoserine modification. The tract at residues 1557-1591 (ECPQGKLVRGDQNEGSPKPKLTETNQDNSFTWSGA) is disordered. Over residues 1578–1591 (TETNQDNSFTWSGA) the composition is skewed to polar residues. Basic and acidic residues-rich tracts occupy residues 1606-1616 (VSSPRENEKPK) and 1628-1638 (NSKESHEREEI). Positions 1606–1697 (VSSPRENEKP…GLIPPTPVPA (92 aa)) are disordered. Polar residues predominate over residues 1641 to 1652 (DLGTVQRTSVFP). The span at 1656–1667 (VKNRTEGLESKA) shows a compositional bias: basic and acidic residues. Threonine 1710 is modified (phosphothreonine). The DNA polymerase activity stretch occupies residues 2052–2538 (AECESQKHVM…KVKIGASWGE (487 aa)). Loop stretches follow at residues 2097-2132 (KLPP…GRQF) and 2212-2276 (EIKM…VPFP). Residues 2104–2117 (MKTQGSKKTLGSTR) are compositionally biased toward polar residues. Residues 2104–2124 (MKTQGSKKTLGSTRRGNESGR) form a disordered region. Aspartate 2284 serves as the catalytic For DNA polymerase activity. Mg(2+) contacts are provided by aspartate 2284 and tyrosine 2285. The tract at residues 2445–2489 (QLETFRSTFKSHGHRESMLQNDRTGLLPKRKLKGMFCPMRGGFFI) is loop 3. A Mg(2+)-binding site is contributed by aspartate 2494.

It belongs to the DNA polymerase type-A family. In terms of assembly, homomultimer; forms homodimers and homotetramers. Interacts with RAD51. Interacts with ORC2 and ORC4. Interacts with RHNO1; interaction takes place during mitosis and promotes POLQ recruitment to DNA damage sites. Interacts (when phosphorylated) with TOPBP1 (via BRCT domains 7 and 8); promoting POLQ recruitment to DNA damage sites. Mg(2+) is required as a cofactor. Post-translationally, phosphorylated by PLK1; promoting interaction with TOPBP1 and recruitment to DNA damage sites.

The protein localises to the nucleus. The protein resides in the chromosome. It carries out the reaction DNA(n) + a 2'-deoxyribonucleoside 5'-triphosphate = DNA(n+1) + diphosphate. It catalyses the reaction ATP + H2O = ADP + phosphate + H(+). Functionally, low-fidelity DNA polymerase with a helicase activity that promotes microhomology-mediated end-joining (MMEJ), an alternative non-homologous end-joining (NHEJ) machinery required to repair double-strand breaks in DNA during mitosis. MMEJ is an error-prone repair pathway that produces deletions of sequences from the strand being repaired and promotes genomic rearrangements, such as telomere fusions, some of them leading to cellular transformation. MMEJ is required during mitosis to repair persistent double-strand breaks that originate in S-phase. Although error-prone, MMEJ protects against chromosomal instability and tumorigenesis. The polymerase acts by binding directly the 2 ends of resected double-strand breaks, allowing microhomologous sequences in the overhangs to form base pairs. It then extends each strand from the base-paired region using the opposing overhang as a template. Requires partially resected DNA containing 2 to 6 base pairs of microhomology to perform MMEJ. The polymerase lacks proofreading activity and is highly promiscuous: unlike most polymerases, promotes extension of ssDNA and partial ssDNA (pssDNA) substrates. When the ends of a break do not contain terminal microhomology must identify embedded complementary sequences through a scanning step. Also acts as a DNA helicase, promoting dissociation of the replication protein A complex (RPA/RP-A), composed of RPA1, RPA2 and RPA3, from resected double-strand breaks to allow their annealing and subsequent joining by MMEJ. Removal of RPA/RP-A complex proteins prevents RAD51 accumulation at resected ends, thereby inhibiting homology-recombination repair (HR) pathway. Also shows RNA-directed DNA polymerase activity to mediate DNA repair in vitro; however this activity needs additional evidence in vivo. May also have lyase activity. Involved in somatic hypermutation of immunoglobulin genes, a process that requires the activity of DNA polymerases to ultimately introduce mutations at both A/T and C/G base pairs. However, POLQ does not play a major role in somatic hypermutation. POLQ-mediated end joining activity is involved in random integration of exogenous DNA hampers. This is DNA polymerase theta from Mus musculus (Mouse).